A 330-amino-acid polypeptide reads, in one-letter code: Beta-ketoacyl-[acyl-carrier-protein] synthase III (330 aa).

Residues Cys111 and His249 contribute to the active site. The ACP-binding stretch occupies residues 250-254 (QANTR). Residue Asn279 is part of the active site.

It belongs to the thiolase-like superfamily. FabH family. As to quaternary structure, homodimer.

It localises to the cytoplasm. The enzyme catalyses malonyl-[ACP] + acetyl-CoA + H(+) = 3-oxobutanoyl-[ACP] + CO2 + CoA. Its pathway is lipid metabolism; fatty acid biosynthesis. Functionally, catalyzes the condensation reaction of fatty acid synthesis by the addition to an acyl acceptor of two carbons from malonyl-ACP. Catalyzes the first condensation reaction which initiates fatty acid synthesis and may therefore play a role in governing the total rate of fatty acid production. Possesses both acetoacetyl-ACP synthase and acetyl transacylase activities. Its substrate specificity determines the biosynthesis of branched-chain and/or straight-chain of fatty acids. In Pseudomonas aeruginosa (strain LESB58), this protein is Beta-ketoacyl-[acyl-carrier-protein] synthase III.